The primary structure comprises 154 residues: Transcriptional repressor NrdR (154 aa).

A zinc finger spans residues 3-34 (CPTCKYNGTRVVDSRPADDGNSIRRRRECEKC). The ATP-cone domain occupies 49–139 (LIVVKKDGAR…VYRQFKDISV (91 aa)).

The protein belongs to the NrdR family. Zn(2+) serves as cofactor.

Its function is as follows. Negatively regulates transcription of bacterial ribonucleotide reductase nrd genes and operons by binding to NrdR-boxes. The sequence is that of Transcriptional repressor NrdR from Listeria innocua serovar 6a (strain ATCC BAA-680 / CLIP 11262).